A 446-amino-acid polypeptide reads, in one-letter code: Neuropeptide Y receptor type 5 (446 aa).

At 1–42 (MDLELQDFYNKTLATENNTAATRNSDFPVWDDYKSSVDDLQY) the chain is on the extracellular side. N10 and N17 each carry an N-linked (GlcNAc...) asparagine glycan. A helical transmembrane segment spans residues 43-63 (FLIGLYTFVSLLGFMGNLLIL). The Cytoplasmic segment spans residues 64–77 (MALMRKRNQKTMVN). A helical transmembrane segment spans residues 78-98 (FLIGNLAFSDILVVLFCSPFT). The Extracellular segment spans residues 99 to 117 (LTSVLLDQWMFGKVMCHIM). C114 and C198 are joined by a disulfide. Residues 118–138 (PFLQCVSVLVSTLILISIAIV) traverse the membrane as a helical segment. Topologically, residues 139-156 (RYHMIKHPISNNLTANHG) are cytoplasmic. Residues 157–177 (YFLIATVWTLGFAICSPLPVF) traverse the membrane as a helical segment. At 178-208 (HSLVELQETFDSALLSSRYLCVESWPSDSYR) the chain is on the extracellular side. Residues 209 to 229 (IAFTISLLLVQYILPLVCLTV) traverse the membrane as a helical segment. At 230–369 (SHTSVCRSIS…KKRSRSVFYR (140 aa)) the chain is on the cytoplasmic side. A helical membrane pass occupies residues 370–390 (LTILILVFAVSWMPLHLFHVV). At 391–407 (TDFNDNLISNRHFKLVY) the chain is on the extracellular side. A helical membrane pass occupies residues 408–428 (CICHLLGMMSCCLNPILYGFL). The Cytoplasmic segment spans residues 429 to 446 (NNGIKADLISLIQCLHMS). C442 carries the S-palmitoyl cysteine lipid modification.

It belongs to the G-protein coupled receptor 1 family.

The protein resides in the cell membrane. Functionally, receptor for neuropeptide Y and peptide YY. The activity of this receptor is mediated by G proteins that inhibit adenylate cyclase activity. Seems to be associated with food intake. Could be involved in feeding disorders. This is Neuropeptide Y receptor type 5 (NPY5R) from Canis lupus familiaris (Dog).